Here is a 241-residue protein sequence, read N- to C-terminus: tRNA (guanine-N(1)-)-methyltransferase (241 aa).

Residues glycine 112 and 131–136 each bind S-adenosyl-L-methionine; that span reads LGDFVL.

It belongs to the RNA methyltransferase TrmD family. In terms of assembly, homodimer.

It is found in the cytoplasm. It catalyses the reaction guanosine(37) in tRNA + S-adenosyl-L-methionine = N(1)-methylguanosine(37) in tRNA + S-adenosyl-L-homocysteine + H(+). Its function is as follows. Specifically methylates guanosine-37 in various tRNAs. The polypeptide is tRNA (guanine-N(1)-)-methyltransferase (Clostridium novyi (strain NT)).